The sequence spans 407 residues: Probable 2,3-bisphosphoglycerate-independent phosphoglycerate mutase (407 aa).

The interval 175–200 is disordered; it reads GSDAINDTDPQQVGKEPLEPKGENPN.

The protein belongs to the BPG-independent phosphoglycerate mutase family. A-PGAM subfamily.

The enzyme catalyses (2R)-2-phosphoglycerate = (2R)-3-phosphoglycerate. It functions in the pathway carbohydrate degradation; glycolysis; pyruvate from D-glyceraldehyde 3-phosphate: step 3/5. Functionally, catalyzes the interconversion of 2-phosphoglycerate and 3-phosphoglycerate. This Aquifex aeolicus (strain VF5) protein is Probable 2,3-bisphosphoglycerate-independent phosphoglycerate mutase.